A 125-amino-acid polypeptide reads, in one-letter code: uncharacterized protein (125 aa).

Residues 15–121 (QINQSIIDVI…HSLVLEQKQL (107 aa)) enclose the PRD domain.

This is an uncharacterized protein from Haemophilus influenzae (strain ATCC 51907 / DSM 11121 / KW20 / Rd).